Here is a 302-residue protein sequence, read N- to C-terminus: UDP-N-acetylenolpyruvoylglucosamine reductase (302 aa).

Residues 31–196 (KIGGPADVLA…LRAWISLERG (166 aa)) enclose the FAD-binding PCMH-type domain. The active site involves arginine 175. Serine 225 serves as the catalytic Proton donor. Glutamate 295 is an active-site residue.

This sequence belongs to the MurB family. FAD is required as a cofactor.

It is found in the cytoplasm. It carries out the reaction UDP-N-acetyl-alpha-D-muramate + NADP(+) = UDP-N-acetyl-3-O-(1-carboxyvinyl)-alpha-D-glucosamine + NADPH + H(+). Its pathway is cell wall biogenesis; peptidoglycan biosynthesis. Cell wall formation. The protein is UDP-N-acetylenolpyruvoylglucosamine reductase of Caldanaerobacter subterraneus subsp. tengcongensis (strain DSM 15242 / JCM 11007 / NBRC 100824 / MB4) (Thermoanaerobacter tengcongensis).